Reading from the N-terminus, the 869-residue chain is Probable inorganic carbon transporter subunit DabA (869 aa).

Positions 1 to 32 (MSTATLEQRAKRGEAPRANDAGHCAHPADGAR) are disordered. Residues 8 to 17 (QRAKRGEAPR) are compositionally biased toward basic and acidic residues. Residues Cys376, Asp378, His555, and Cys570 each contribute to the Zn(2+) site.

It belongs to the inorganic carbon transporter (TC 9.A.2) DabA family. As to quaternary structure, forms a complex with DabB. Requires Zn(2+) as cofactor.

It is found in the cell inner membrane. Part of an energy-coupled inorganic carbon pump. The polypeptide is Probable inorganic carbon transporter subunit DabA (Burkholderia multivorans (strain ATCC 17616 / 249)).